Consider the following 275-residue polypeptide: Digeranylgeranylglyceryl phosphate synthase (275 aa).

8 helical membrane-spanning segments follow: residues V12–W32, T35–I55, I88–F108, K125–G145, G146–F166, W200–L220, V224–H244, and S255–I275.

Belongs to the UbiA prenyltransferase family. DGGGP synthase subfamily. Mg(2+) is required as a cofactor.

It localises to the cell membrane. The catalysed reaction is sn-3-O-(geranylgeranyl)glycerol 1-phosphate + (2E,6E,10E)-geranylgeranyl diphosphate = 2,3-bis-O-(geranylgeranyl)-sn-glycerol 1-phosphate + diphosphate. It participates in membrane lipid metabolism; glycerophospholipid metabolism. In terms of biological role, prenyltransferase that catalyzes the transfer of the geranylgeranyl moiety of geranylgeranyl diphosphate (GGPP) to the C2 hydroxyl of (S)-3-O-geranylgeranylglyceryl phosphate (GGGP). This reaction is the second ether-bond-formation step in the biosynthesis of archaeal membrane lipids. The chain is Digeranylgeranylglyceryl phosphate synthase from Sulfolobus acidocaldarius (strain ATCC 33909 / DSM 639 / JCM 8929 / NBRC 15157 / NCIMB 11770).